We begin with the raw amino-acid sequence, 288 residues long: Protease HtpX homolog (288 aa).

2 consecutive transmembrane segments (helical) span residues 7 to 27 (TAVLMAAITALFIVVGGMLGG) and 29 to 49 (QGMLMALLMAVGMNFFSYWFS). H131 lines the Zn(2+) pocket. E132 is a catalytic residue. H135 provides a ligand contact to Zn(2+). Helical transmembrane passes span 141–161 (ILISAVAATMAGAISALANFA) and 177–197 (IASLMVAILAPIAASLIQMSI). E202 serves as a coordination point for Zn(2+).

This sequence belongs to the peptidase M48B family. The cofactor is Zn(2+).

It localises to the cell inner membrane. This chain is Protease HtpX homolog, found in Polynucleobacter necessarius subsp. necessarius (strain STIR1).